A 229-amino-acid polypeptide reads, in one-letter code: Large ribosomal subunit protein uL1 (229 aa).

Belongs to the universal ribosomal protein uL1 family. Part of the 50S ribosomal subunit.

Its function is as follows. Binds directly to 23S rRNA. The L1 stalk is quite mobile in the ribosome, and is involved in E site tRNA release. Protein L1 is also a translational repressor protein, it controls the translation of the L11 operon by binding to its mRNA. In Phytoplasma australiense, this protein is Large ribosomal subunit protein uL1.